A 777-amino-acid polypeptide reads, in one-letter code: 1,4-alpha-glucan branching enzyme GlgB (777 aa).

The active-site Nucleophile is aspartate 408. Glutamate 461 acts as the Proton donor in catalysis.

It belongs to the glycosyl hydrolase 13 family. GlgB subfamily. Monomer.

It catalyses the reaction Transfers a segment of a (1-&gt;4)-alpha-D-glucan chain to a primary hydroxy group in a similar glucan chain.. Its pathway is glycan biosynthesis; glycogen biosynthesis. Functionally, catalyzes the formation of the alpha-1,6-glucosidic linkages in glycogen by scission of a 1,4-alpha-linked oligosaccharide from growing alpha-1,4-glucan chains and the subsequent attachment of the oligosaccharide to the alpha-1,6 position. This chain is 1,4-alpha-glucan branching enzyme GlgB, found in Actinobacillus pleuropneumoniae serotype 7 (strain AP76).